The following is a 327-amino-acid chain: MDLFSSLPNELLYHILSFLSTKEAALTSVLSKRWRNLFAFVPYLEFDDSVFLHPEERKREKEGILQSFMDFVDRVLDLHGDSLIKTFSLKCKTGVDSDHVDRWICNVLARGVSDLDLFIDFRDLYSLPHEVGVSRTLVVLRVGSESDLYWWQKFLCLPMLKTLVLDSCWLCIGQFQILLLACPALEELDMTNTRWKDSNVTVSSSILKELTIDLHGCCSVVNLKSLSFDAPSLVYFYYCDSLAEDYPQVNLKNLVEAQINLLLTQAQIEQVRALNNEMLVADDVFPGLGNAWKLITGLRNVQQLYLSPDTLEVSFLSLVYFWLVGRI.

The 47-residue stretch at 1 to 47 (MDLFSSLPNELLYHILSFLSTKEAALTSVLSKRWRNLFAFVPYLEFD) folds into the F-box domain. 5 LRR repeats span residues 116–144 (DLFI…RVGS), 161–192 (KTLV…DMTN), 199–230 (NVTV…SFDA), 235–261 (YFYY…QINL), and 277–308 (EMLV…YLSP).

The protein is F-box/LRR-repeat protein At3g58900 of Arabidopsis thaliana (Mouse-ear cress).